Here is a 313-residue protein sequence, read N- to C-terminus: 3'-5' exoribonuclease YhaM (313 aa).

The 117-residue stretch at His163–Ser279 folds into the HD domain.

Belongs to the YhaM family.

In terms of biological role, shows a 3'-5' exoribonuclease activity. The polypeptide is 3'-5' exoribonuclease YhaM (Listeria monocytogenes serotype 4b (strain CLIP80459)).